Reading from the N-terminus, the 476-residue chain is MAIRVYNTLTKQKEEFRPLREGEVRMYVCGPTVYDYTHLGHARTYIAFDVIRRYLEHRGYTVLMVMNFTDIDDKIIRRANETGEDPKELAEKFLRYFLEDMKALKVKPADIYPRVTEHIQDIIDFVRKLQEKGYAYEGNDGVYFEVRKFKDYGKLSGIKLEELVKGARVEPGEGKKNPEDFALWKKAKPGEPKWESPWGEGRPGWHIECSTMSTKYLGESFDIHGGGNDLIFPHHENEIAQSEACTGHEWVRYWLHTGFVMVSGEKMSKSLGNFVTIRELLQKYSPEVIRFFVLQKHYRSPLDYTEEGIQHAKNNLERLYNTLENIRVAMEKADVAFRWDEEEFELYETVREARKKFYDAMDDDFNTAEALKAVFEVSNAVNRYLTKVEKPKESVLRKALEFFKIVSEVFGLFEDYFKEQKAGDEEALIELLVSVRAELRKQRNFTLADKIRDELKALGIQLEDTPQGTIWKRISV.

Zn(2+) is bound at residue Cys29. A 'HIGH' region motif is present at residues 31–41 (PTVYDYTHLGH). Cys209, His234, and Glu238 together coordinate Zn(2+). The 'KMSKS' region signature appears at 266–270 (KMSKS). Lys269 is an ATP binding site.

Belongs to the class-I aminoacyl-tRNA synthetase family. Requires Zn(2+) as cofactor.

The protein localises to the cytoplasm. It carries out the reaction tRNA(Cys) + L-cysteine + ATP = L-cysteinyl-tRNA(Cys) + AMP + diphosphate. The sequence is that of Cysteine--tRNA ligase from Thermococcus onnurineus (strain NA1).